The chain runs to 69 residues: Beta-defensin 1 (69 aa).

An N-terminal signal peptide occupies residues 1 to 21 (MKTHYFLLVMLFFLFSQMELG). Positions 22–32 (AGILTSLGRRT) are excised as a propeptide. 3 disulfides stabilise this stretch: cysteine 37/cysteine 66, cysteine 44/cysteine 59, and cysteine 49/cysteine 67.

Belongs to the beta-defensin family. As to quaternary structure, monomer. Homodimer. As to expression, highly expressed in kidney.

The protein localises to the secreted. It localises to the membrane. Its function is as follows. Has bactericidal activity. May act as a ligand for C-C chemokine receptor CCR6. Positively regulates the sperm motility and bactericidal activity in a CCR6-dependent manner. Binds to CCR6 and triggers Ca2+ mobilization in the sperm which is important for its motility. The protein is Beta-defensin 1 (Defb1) of Rattus norvegicus (Rat).